The sequence spans 301 residues: Zinc finger protein LEE1 (301 aa).

Positions 1–25 (MDAFENMSVSNHPGGNARRNSQSAN) are disordered. Positions 7–25 (MSVSNHPGGNARRNSQSAN) are enriched in polar residues. S21 and S30 each carry phosphoserine. C3H1-type zinc fingers lie at residues 87–114 (DYSH…HSPD) and 123–145 (PCKY…HVLP). S282 bears the Phosphoserine mark.

In Saccharomyces cerevisiae (strain ATCC 204508 / S288c) (Baker's yeast), this protein is Zinc finger protein LEE1 (LEE1).